Here is a 428-residue protein sequence, read N- to C-terminus: Nematode resistance protein-like HSPRO1 (428 aa).

In terms of assembly, interacts with SNF4.

The protein localises to the cytoplasm. Its function is as follows. Positive regulator of basal resistance. In Arabidopsis thaliana (Mouse-ear cress), this protein is Nematode resistance protein-like HSPRO1 (HSPRO1).